The following is a 510-amino-acid chain: Probable cytosol aminopeptidase (510 aa).

2 residues coordinate Mn(2+): Lys-268 and Asp-273. Lys-280 is a catalytic residue. Mn(2+)-binding residues include Asp-291, Asp-350, and Glu-352. Residue Arg-354 is part of the active site.

This sequence belongs to the peptidase M17 family. Mn(2+) is required as a cofactor.

Its subcellular location is the cytoplasm. It carries out the reaction Release of an N-terminal amino acid, Xaa-|-Yaa-, in which Xaa is preferably Leu, but may be other amino acids including Pro although not Arg or Lys, and Yaa may be Pro. Amino acid amides and methyl esters are also readily hydrolyzed, but rates on arylamides are exceedingly low.. The catalysed reaction is Release of an N-terminal amino acid, preferentially leucine, but not glutamic or aspartic acids.. Functionally, presumably involved in the processing and regular turnover of intracellular proteins. Catalyzes the removal of unsubstituted N-terminal amino acids from various peptides. The protein is Probable cytosol aminopeptidase of Micrococcus luteus (strain ATCC 4698 / DSM 20030 / JCM 1464 / CCM 169 / CCUG 5858 / IAM 1056 / NBRC 3333 / NCIMB 9278 / NCTC 2665 / VKM Ac-2230) (Micrococcus lysodeikticus).